The primary structure comprises 100 residues: Integration host factor subunit alpha (100 aa).

It belongs to the bacterial histone-like protein family. Heterodimer of an alpha and a beta chain.

Functionally, this protein is one of the two subunits of integration host factor, a specific DNA-binding protein that functions in genetic recombination as well as in transcriptional and translational control. The polypeptide is Integration host factor subunit alpha (Buchnera aphidicola subsp. Schizaphis graminum (strain Sg)).